We begin with the raw amino-acid sequence, 344 residues long: MITERQSNILNLIVDLFTQTHEPVGSKALQSLIASSSATIRNDMAKLEKLGLLEKAHTSSGRMPSAAGFKYFVEHSLNLGSIDEQDLYQLVKAFDFEAFKLEDVLLRASQMLSDTTGYTAAILDVEPARQRLTGFDIVQLSSHDALAVLTLDESKPLTVQFAIPKNFMNRDLLVLKGIVADRLLGKDVMTVHYKLRTEIPQIVQKYFTVTDNVLDLFDYIFVGLFRETIFVSGKVAALDYAGLATYQFLDEEQRLALSIRQSLSEEEMATVQVADSSEPALANVTLLTYKFLIPYRGFGLLSLIGPVDMDYRRSVSLINVIGQLLAVKLRDYYRYLNSNHYEVH.

Belongs to the HrcA family.

Functionally, negative regulator of class I heat shock genes (grpE-dnaK-dnaJ and groELS operons). Prevents heat-shock induction of these operons. This is Heat-inducible transcription repressor HrcA from Streptococcus equi subsp. zooepidemicus (strain H70).